A 348-amino-acid polypeptide reads, in one-letter code: Centromere protein N-A (348 aa).

The protein belongs to the CENP-N/CHL4 family.

The protein resides in the nucleus. It localises to the chromosome. It is found in the centromere. In terms of biological role, probable component of a centromeric complex involved in assembly of kinetochore proteins, mitotic progression and chromosome segregation. In Xenopus laevis (African clawed frog), this protein is Centromere protein N-A (cenpn-a).